Reading from the N-terminus, the 840-residue chain is SLIT and NTRK-like protein 6 (840 aa).

Residues 1–18 form the signal peptide; that stretch reads MKLWTYLLYPSLLACLSL. Residues 22-67 enclose the LRRNT 1 domain; it reads SPMPSVRGSCDTLCNCEEKDGIMIINCEEKGINKLSQISVPPSRPF. Over 23–609 the chain is Extracellular; that stretch reads PMPSVRGSCD…LTDAVPLSVL (587 aa). 5 LRR repeats span residues 89-110, 113-134, 137-158, 161-182, and 184-205; these read NALSIHLGFNNIADIETGAFNG, LLKQLHINHNSLEILKEDTFHG, NLEFLQADNNFITIIEPSAFSK, RLKVLILNDNAIESLPPNIFRF, and PLTHLDLRGNQLQTLPYVGFLE. The region spanning 218 to 269 is the LRRCT 1 domain; that stretch reads NKWACNCELLQLKNWLENMPPQSIIGDVICYSPPPFKGSVLSRLKKESFCPT. An LRRNT 2 domain is found at 319–360; it reads PSTQLPVPYCPIPCNCKVLSPSGLLIHCQERNIESLSDLQPP. LRR repeat units follow at residues 363–384, 387–408, 411–432, 435–456, 459–480, and 482–503; these read NPRKLILAGNIIHTLMKSDLTD, TLEMLHLGNNRIEVLEEGSFMN, RLQKLYLNGNHLTKLNKGMFLG, SLEYLYLEYNAVKEILPGTFNP, KLKVLYLNNNLLQVLPAHIFLG, and PLTRVNLKTNQFTHLPVSNILD. Residues 516–567 enclose the LRRCT 2 domain; it reads NPWDCSCDLVGLQQWIHKLGKGTMTDDILCTSPGHLDKKELKALNSDLLCPG. Residues 610–630 traverse the membrane as a helical segment; the sequence is ILGLLIVFITIVFCAAGIVVF. Topologically, residues 631 to 840 are cytoplasmic; sequence VLHRRRRYKK…DYLEVLEQQT (210 aa). Residues 717–726 show a composition bias toward basic and acidic residues; sequence QRSLLERENH. The interval 717 to 736 is disordered; that stretch reads QRSLLERENHSPLTGSNMKY. Positions 727-736 are enriched in polar residues; that stretch reads SPLTGSNMKY.

Belongs to the SLITRK family. As to expression, in the embryo, expressed in otic cyst, lateral trunk epidermis and underlying mesodermal tissue, limb bud, maxillary process, cochlea, retina, tongue, tooth primordium, central nervous system, and primordia of visceral organs including lung, gastrointestinal tract and pancreas. In the central nervous system, expressed primarily in dorsal thalamus, cerebellum and medulla.

It is found in the cell membrane. Functionally, regulator of neurite outgrowth required for normal hearing and vision. This chain is SLIT and NTRK-like protein 6 (Slitrk6), found in Mus musculus (Mouse).